Consider the following 299-residue polypeptide: Meso-diaminopimelate D-dehydrogenase (299 aa).

NADP(+) contacts are provided by residues 11 to 14, Arg36, 67 to 70, 90 to 92, and 119 to 123; these read YGNI, CTPT, SFD, and AGWDP. Residues Asp92, Asp122, Phe146, 152–153, Thr171, Arg181, His227, and Asn253 contribute to the substrate site; that span reads MG.

Belongs to the diaminopimelate dehydrogenase family. As to quaternary structure, homodimer.

The enzyme catalyses meso-2,6-diaminopimelate + NADP(+) + H2O = (S)-2-amino-6-oxoheptanedioate + NH4(+) + NADPH + H(+). It participates in amino-acid biosynthesis; L-lysine biosynthesis via DAP pathway; DL-2,6-diaminopimelate from (S)-tetrahydrodipicolinate: step 1/1. Its function is as follows. Catalyzes the reversible NADPH-dependent reductive amination of L-2-amino-6-oxopimelate, the acyclic form of L-tetrahydrodipicolinate, to generate the meso compound, D,L-2,6-diaminopimelate. Probably plays a role in lysine biosynthesis. Exhibits a high substrate specificity for meso-2,6-diaminopimelate (m-DAP), since the activity with L,L-2,6-diaminopimelate is less than 5% of the activity observed with m-DAP. Can use NAD(+) only very poorly since the activity observed in the presence of NAD(+) is about 14% of that with NADP(+). The sequence is that of Meso-diaminopimelate D-dehydrogenase (ddh) from Bacteroides fragilis (strain ATCC 25285 / DSM 2151 / CCUG 4856 / JCM 11019 / LMG 10263 / NCTC 9343 / Onslow / VPI 2553 / EN-2).